Here is a 319-residue protein sequence, read N- to C-terminus: Lipoyl synthase (319 aa).

Residues 1–29 (MVVVVDTVSDKPIRPRHPEKAARPDALSP) are disordered. Basic and acidic residues predominate over residues 8 to 29 (VSDKPIRPRHPEKAARPDALSP). Residues C61, C66, C72, C87, C91, C94, and S300 each coordinate [4Fe-4S] cluster. A Radical SAM core domain is found at 73–289 (WDRKHATFMI…ESLAYAKGFL (217 aa)).

The protein belongs to the radical SAM superfamily. Lipoyl synthase family. Requires [4Fe-4S] cluster as cofactor.

The protein localises to the cytoplasm. The catalysed reaction is [[Fe-S] cluster scaffold protein carrying a second [4Fe-4S](2+) cluster] + N(6)-octanoyl-L-lysyl-[protein] + 2 oxidized [2Fe-2S]-[ferredoxin] + 2 S-adenosyl-L-methionine + 4 H(+) = [[Fe-S] cluster scaffold protein] + N(6)-[(R)-dihydrolipoyl]-L-lysyl-[protein] + 4 Fe(3+) + 2 hydrogen sulfide + 2 5'-deoxyadenosine + 2 L-methionine + 2 reduced [2Fe-2S]-[ferredoxin]. Its pathway is protein modification; protein lipoylation via endogenous pathway; protein N(6)-(lipoyl)lysine from octanoyl-[acyl-carrier-protein]: step 2/2. In terms of biological role, catalyzes the radical-mediated insertion of two sulfur atoms into the C-6 and C-8 positions of the octanoyl moiety bound to the lipoyl domains of lipoate-dependent enzymes, thereby converting the octanoylated domains into lipoylated derivatives. This is Lipoyl synthase from Rhodopseudomonas palustris (strain BisA53).